The primary structure comprises 293 residues: uncharacterized protein (293 aa).

This is an uncharacterized protein from Mycobacterium tuberculosis (strain CDC 1551 / Oshkosh).